The chain runs to 396 residues: MKEKLTNNTFQVNEKGYYGKFGGAFIPEILHENINRLQKAYKSIIESQEFIEQYYKLLHDYAGRPSPLYFAKRLSDKHKCRIYIKREDLNHTGSHKINNTLGQILLSRKMGKTRIIAETGAGQHGVASATVCALMDMKCVVYMGKTDINRQNLNVRKMEMLGATVIPVTSGNMTLKDATNEAIRDWCSNPDDTHYIIGSTVGPHPYPDMVARFQSIISKEIKSQLPEKENRNYPDYLIACIGGGSNAAGTIYEYLYDNRVKIILAEAAGQGIHSGHSAATIHLGKIGIIHGSKTLIMQTSDGQIEEPYSISAGLDYPGIGPMHAHIAKQGRSEILAIDDNEALSAAMELTRLEGIIPALESAHALGIFQKKQFKTNDVIVVCLSGRGDKDMETYYK.

Residue Lys-96 is modified to N6-(pyridoxal phosphate)lysine.

This sequence belongs to the TrpB family. As to quaternary structure, tetramer of two alpha and two beta chains. Pyridoxal 5'-phosphate serves as cofactor.

It catalyses the reaction (1S,2R)-1-C-(indol-3-yl)glycerol 3-phosphate + L-serine = D-glyceraldehyde 3-phosphate + L-tryptophan + H2O. Its pathway is amino-acid biosynthesis; L-tryptophan biosynthesis; L-tryptophan from chorismate: step 5/5. The beta subunit is responsible for the synthesis of L-tryptophan from indole and L-serine. The sequence is that of Tryptophan synthase beta chain from Azobacteroides pseudotrichonymphae genomovar. CFP2.